The chain runs to 190 residues: Cytoplasmic envelopment protein 3 (190 aa).

G2 carries N-myristoyl glycine; by host lipidation. A disordered region spans residues 14 to 190 (GTTSGEPLKD…TKKPAASLPF (177 aa)). Residues 30–43 (SLRSYDNIPPTSSS) are compositionally biased toward polar residues. Acidic residues predominate over residues 44–58 (DEGEDDDDGEDDDNE). The segment covering 80–90 (SHREATHDGPK) has biased composition (basic and acidic residues). Residues 108–123 (KQSKKKKKPSKHHHHQ) show a composition bias toward basic residues. Residues 130 to 139 (ETDDLDEEDT) show a composition bias toward acidic residues.

This sequence belongs to the herpesviridae cytoplasmic envelopment protein 3 family. As to quaternary structure, interacts with cytoplasmic envelopment protein 2; this interaction is essential for the proper localization of each protein to the assembly complex and thus for the production of infectious virus. Myristoylation and palmitoylation (probably on one or more of the nearby cysteines at the N-terminus) enable membrane-binding and Golgi apparatus-specific targeting and are essential for efficient packaging. Post-translationally, phosphorylated. Phosphorylation does not seem to be required for recycling to the host Golgi apparatus. Packaging is selective for underphosphorylated forms.

It localises to the virion tegument. The protein localises to the virion membrane. It is found in the host cell membrane. Its subcellular location is the host Golgi apparatus membrane. Plays an important role in the cytoplasmic envelopment of tegument proteins and capsids during the assembly and egress processes. Also participates in viral entry at the fusion step probably by regulating the core fusion machinery. In Human cytomegalovirus (strain Merlin) (HHV-5), this protein is Cytoplasmic envelopment protein 3 (UL99).